Here is a 50-residue protein sequence, read N- to C-terminus: Protein PsbN (50 aa).

Residues 14–34 form a helical membrane-spanning segment; that stretch reads VAVTILAILLALTGFGLWTAF.

This sequence belongs to the PsbN family.

It is found in the cellular thylakoid membrane. Functionally, may play a role in photosystem I and II biogenesis. The polypeptide is Protein PsbN (Prochlorococcus marinus (strain MIT 9312)).